A 423-amino-acid chain; its full sequence is Heat shock transcription factor, X-linked (423 aa).

The span at 1-25 (MEDKRSLSMARCEERNSRGQDHGLE) shows a compositional bias: basic and acidic residues. Disordered regions lie at residues 1–56 (MEDK…STGS), 215–303 (KSAP…EGSQ), and 397–423 (PHSHRTSQYMPASDGPQAYPDYADQST). Residues 98–282 (PFPQKLWRLV…PATPVMVPDS (185 aa)) mediate DNA binding. A Glycyl lysine isopeptide (Lys-Gly) (interchain with G-Cter in SUMO1) cross-link involves residue lysine 215. Positions 243-254 (HTSPNENDQVTP) are enriched in polar residues.

The protein belongs to the HSF family. As to expression, testis-specific.

It localises to the nucleus. The protein resides in the cytoplasm. The chain is Heat shock transcription factor, X-linked (HSFX1) from Homo sapiens (Human).